The primary structure comprises 512 residues: Glucagon-like peptide 2 receptor (512 aa).

Residues 1–135 lie on the Extracellular side of the membrane; sequence MRRLWGPGTP…KQNVDHYHHT (135 aa). 3 disulfides stabilise this stretch: Cys-43–Cys-65, Cys-56–Cys-97, and Cys-78–Cys-119. The N-linked (GlcNAc...) asparagine glycan is linked to Asn-73. Residues 136 to 160 traverse the membrane as a helical segment; it reads LLSTLQLMYTVGYSLSLISLFLALT. Residues 161–172 lie on the Cytoplasmic side of the membrane; the sequence is LFLFLRKLHCTR. Residues 173–197 form a helical membrane-spanning segment; that stretch reads NYIHMNLFASFILRALVVLVKDMVF. At 198 to 223 the chain is on the extracellular side; it reads YNSYSRRPDSESGWMSYLSEISASCR. A helical membrane pass occupies residues 224-247; sequence SVQVLLHYFVGTNHLWLLVEGLYL. Residues 248–261 are Cytoplasmic-facing; sequence HALLEPTVLPERRL. A helical membrane pass occupies residues 262-283; it reads WPKYLVVGWAFPMLFVIPWIFV. Topologically, residues 284-301 are extracellular; the sequence is RASLENTGCWAVNENKKI. Residues 302 to 324 form a helical membrane-spanning segment; the sequence is WWIIRGPILLCVTVNFFIFLKIL. Residues 325–348 lie on the Cytoplasmic side of the membrane; the sequence is KLLISKFRAHQMCFRDYKYRLAKS. Residues 349-367 form a helical membrane-spanning segment; the sequence is TLLLILLMGVHEFLFTFFT. Over 368 to 379 the chain is Extracellular; the sequence is DDQVQGFSRLIR. The helical transmembrane segment at 380-400 threads the bilayer; sequence LFIQLTLSSFHGFLVALQYGF. At 401 to 512 the chain is on the cytoplasmic side; it reads ASREVKAELR…MEEILEESEI (112 aa). The disordered stretch occupies residues 458-494; sequence SGVSSHLTAGNLRDHGAQPHRGRGAWPRASSLSESSE.

This sequence belongs to the G-protein coupled receptor 2 family.

The protein localises to the cell membrane. Functionally, this is a receptor for glucagon-like peptide 2. The activity of this receptor is mediated by G proteins which activate adenylyl cyclase. In Mus musculus (Mouse), this protein is Glucagon-like peptide 2 receptor (Glp2r).